A 1381-amino-acid polypeptide reads, in one-letter code: Major capsid protein (1381 aa).

It belongs to the herpesviridae major capsid protein family. In terms of assembly, homomultimer. Makes the hexons and eleven out of twelve pentons. Interacts with triplex proteins 1/TRX1 and 2/TRX2; adjacent capsomers are linked together in groups of three by triplexes, heterotrimeric complexes composed of one molecule of TRX1 and two molecules of TRX2. Interacts with scaffold protein; this interaction allows efficient MCP transport to the host nucleus. Interacts with capsid vertex component 2/CVC2. Interacts with the small capsomere-interacting protein/SCP.

It is found in the virion. It localises to the host nucleus. Self-assembles to form an icosahedral capsid with a T=16 symmetry, about 200 nm in diameter, and consisting of 150 hexons and 12 pentons (total of 162 capsomers). Hexons form the edges and faces of the capsid and are each composed of six MCP molecules. In contrast, one penton is found at each of the 12 vertices. Eleven of the pentons are MCP pentamers, while the last vertex is occupied by the portal complex. The capsid is surrounded by a layer of proteinaceous material designated the tegument which, in turn, is enclosed in an envelope of host cell-derived lipids containing virus-encoded glycoproteins. The chain is Major capsid protein from Epstein-Barr virus (strain B95-8) (HHV-4).